The sequence spans 894 residues: Histone-lysine N-methyltransferase PRDM9 (894 aa).

Disordered stretches follow at residues 1-23 (MSPE…RKPM) and 143-174 (SGSE…LRKK). The region spanning 23-86 (MVKDAFKDIS…RRQAIKLQVD (64 aa)) is the KRAB-related domain. Over residues 143–164 (SGSEQAQKPVSPSGEASTSGQH) the composition is skewed to polar residues. Positions 205, 208, 216, and 219 each coordinate Zn(2+). One can recognise an SET domain in the interval 244–358 (PGLRIGPSGI…PGCELLVWYG (115 aa)). S-adenosyl-L-methionine-binding positions include 256–258 (AGL), Y291, and 320–321 (NC). 288-294 (NNGYSWL) lines the substrate pocket. A substrate-binding site is contributed by Y357. At K368 the chain carries N6,N6,N6-trimethyllysine; alternate. An N6-methyllysine; alternate modification is found at K368. K372 and K374 each carry N6-methyllysine. The segment at 388–411 (HPCPSCCLAFSSQKFLSQHVERNH) adopts a C2H2-type 1 zinc-finger fold. Positions 390, 393, 406, and 411 each coordinate Zn(2+). A disordered region spans residues 408 to 469 (ERNHSSQNFP…SKLLNKRTWQ (62 aa)). Residues 444–461 (PHSRNDKTKGQEIKERSK) are compositionally biased toward basic and acidic residues. A C2H2-type 2; degenerate zinc finger spans residues 524-546 (VKYGECGQGFSVKSDVITHQRTH). 12 C2H2-type zinc fingers span residues 552 to 574 (YVCR…QRIH), 580 to 602 (YVCR…QRTH), 608 to 630 (YVCR…QRRH), 636 to 658 (YVCR…QRRH), 664 to 686 (YVCR…QRTH), 692 to 714 (YVCR…QRTH), 720 to 742 (YVCR…QRTH), 748 to 770 (YVCR…QRTH), 776 to 798 (YVCR…QRTH), 804 to 826 (YVCR…QRTH), 832 to 854 (YVCR…QRTH), and 860 to 882 (YVCR…QRTH). Zn(2+) contacts are provided by C722, C725, H738, H742, C750, C753, H766, H770, C778, C781, H794, H798, C806, C809, H822, and H826. The interval 730 to 820 (SNKSHLLRHQ…RGFSNKSHLL (91 aa)) is DNA-binding.

It belongs to the class V-like SAM-binding methyltransferase superfamily. In terms of assembly, homodimer. Interacts with EHMT2 and CDYL; interaction only takes place when PRDM9 is bound to hotspot DNA. Interacts with CXXC1; this interaction does not link PRDM9-activated recombination hotspot sites with DSB machinery and is not required for the hotspot recognition pathway. Forms a complex with EWSR1, REC8, SYCP3 and SYCP1; complex formation is dependent of phosphorylated form of REC8 and requires PRDM9 bound to hotspot DNA; EWSR1 joins PRDM9 with the chromosomal axis through REC8. Mono-methylated; automethylated. Tri-methylated; automethylated. Mono-methylation is predominant; automethylation is lower and slower than H3 peptide methylation and is in a highest S-adenosyl-L-methionine concentration-dependent. There are two major sites for automethylation at Lys-368 and Lys-374. Lysines can be simultaneously methylated, such as Lys-368(me3)/Lys-372(me1), Lys-368(me1)/Lys-374(me1) and Lys-368(me1)/Lys-372(me1)/Lys-374(me1). Automethylation is an intramolecular (cis) process.

The protein localises to the nucleus. It is found in the chromosome. The catalysed reaction is L-lysyl-[protein] + S-adenosyl-L-methionine = N(6)-methyl-L-lysyl-[protein] + S-adenosyl-L-homocysteine + H(+). The enzyme catalyses N(6)-methyl-L-lysyl-[protein] + S-adenosyl-L-methionine = N(6),N(6)-dimethyl-L-lysyl-[protein] + S-adenosyl-L-homocysteine + H(+). It carries out the reaction L-lysyl(4)-[histone H3] + 3 S-adenosyl-L-methionine = N(6),N(6),N(6)-trimethyl-L-lysyl(4)-[histone H3] + 3 S-adenosyl-L-homocysteine + 3 H(+). It catalyses the reaction L-lysyl(36)-[histone H3] + 3 S-adenosyl-L-methionine = N(6),N(6),N(6)-trimethyl-L-lysyl(36)-[histone H3] + 3 S-adenosyl-L-homocysteine + 3 H(+). The catalysed reaction is L-lysyl(9)-[histone H3] + 3 S-adenosyl-L-methionine = N(6),N(6),N(6)-trimethyl-L-lysyl(9)-[histone H3] + 3 S-adenosyl-L-homocysteine + 3 H(+). The enzyme catalyses L-lysyl(20)-[histone H4] + S-adenosyl-L-methionine = N(6)-methyl-L-lysyl(20)-[histone H4] + S-adenosyl-L-homocysteine + H(+). It carries out the reaction N(6)-methyl-L-lysyl(20)-[histone H4] + S-adenosyl-L-methionine = N(6),N(6)-dimethyl-L-lysyl(20)-[histone H4] + S-adenosyl-L-homocysteine + H(+). Its activity is regulated as follows. Inhibited by suramin with an IC(50) of 4.1 uM. Functionally, histone methyltransferase that sequentially mono-, di-, and tri-methylates both 'Lys-4' (H3K4) and 'Lys-36' (H3K36) of histone H3 to produce respectively trimethylated 'Lys-4' (H3K4me3) and trimethylated 'Lys-36' (H3K36me3) histone H3 and plays a key role in meiotic prophase by determining hotspot localization thereby promoting meiotic recombination. Can also methylate all four core histones with H3 being the best substrate and the most highly modified. Is also able, on one hand, to mono and di-methylate H4K20 and on other hand to trimethylate H3K9 with the di-methylated H3K9 as the best substrate. During meiotic prophase, binds specific DNA sequences through its zinc finger domains thereby determining hotspot localization where it promotes local H3K4me3 and H3K36me3 enrichment on the same nucleosomes through its histone methyltransferase activity. Thereby promotes double-stranded breaks (DSB) formation, at this subset of PRDM9-binding sites, that initiates meiotic recombination for the proper meiotic progression. During meiotic progression hotspot-bound PRDM9 interacts with several complexes; in early leptonema binds CDYL and EHMT2 followed by EWSR1 and CXXC1 by the end of leptonema. EWSR1 joins PRDM9 with the chromosomal axis through REC8. In this way, controls the DSB repair pathway, pairing of homologous chromosomes and sex body formation. Moreover plays a central role in the transcriptional activation of genes during early meiotic prophase thanks to H3K4me3 and H3K36me3 enrichment that represents a specific tag for epigenetic transcriptional activation. In addition performs automethylation. Acetylation and phosphorylation of histone H3 attenuate or prevent histone H3 methylation. The polypeptide is Histone-lysine N-methyltransferase PRDM9 (Homo sapiens (Human)).